The sequence spans 222 residues: tRNA (guanine-N(1)-)-methyltransferase (222 aa).

Residues G112 and 132 to 137 (IGDYVL) each bind S-adenosyl-L-methionine.

This sequence belongs to the RNA methyltransferase TrmD family. Homodimer.

It localises to the cytoplasm. The enzyme catalyses guanosine(37) in tRNA + S-adenosyl-L-methionine = N(1)-methylguanosine(37) in tRNA + S-adenosyl-L-homocysteine + H(+). Functionally, specifically methylates guanosine-37 in various tRNAs. This chain is tRNA (guanine-N(1)-)-methyltransferase, found in Azobacteroides pseudotrichonymphae genomovar. CFP2.